Reading from the N-terminus, the 88-residue chain is Elongation factor 1-beta (88 aa).

Belongs to the EF-1-beta/EF-1-delta family.

In terms of biological role, promotes the exchange of GDP for GTP in EF-1-alpha/GDP, thus allowing the regeneration of EF-1-alpha/GTP that could then be used to form the ternary complex EF-1-alpha/GTP/AAtRNA. This Haloarcula marismortui (strain ATCC 43049 / DSM 3752 / JCM 8966 / VKM B-1809) (Halobacterium marismortui) protein is Elongation factor 1-beta.